Consider the following 232-residue polypeptide: T-cell surface glycoprotein CD1b-3 (232 aa).

At 1 to 201 the chain is on the extracellular side; that stretch reads GLQEFQFEYP…LYWGHPMYIG (201 aa). Cystine bridges form between Cys19-Cys83, Cys48-Cys62, and Cys123-Cys178. Asn45 carries N-linked (GlcNAc...) asparagine glycosylation. An Ig-like domain is found at 84–194; the sequence is PRYLLGVLDA…LGDQDIILYW (111 aa). Residues 202–222 form a helical membrane-spanning segment; it reads LIFVAIIVPSLILLICLALWF. Topologically, residues 223–232 are cytoplasmic; sequence WRRWSYQTVL.

In terms of assembly, heterodimer with B2M (beta-2-microglobulin). Interacts with saposin C.

It is found in the cell membrane. The protein resides in the endosome membrane. It localises to the lysosome membrane. In terms of biological role, antigen-presenting protein that binds self and non-self lipid and glycolipid antigens and presents them to T-cell receptors on natural killer T-cells. In Ovis aries (Sheep), this protein is T-cell surface glycoprotein CD1b-3.